We begin with the raw amino-acid sequence, 69 residues long: Conotoxin Eb6.14 (69 aa).

The N-terminal stretch at 1–17 (VLIIAVLFLTACQLTTA) is a signal peptide. A propeptide spanning residues 18 to 41 (ETYSRGRQKHRARRSTDKNSKWTR) is cleaved from the precursor. 3 cysteine pairs are disulfide-bonded: cysteine 43–cysteine 57, cysteine 50–cysteine 61, and cysteine 56–cysteine 68.

Belongs to the conotoxin O1 superfamily. In terms of tissue distribution, expressed by the venom duct.

The protein localises to the secreted. In Conus ebraeus (Hebrew cone), this protein is Conotoxin Eb6.14 (E1).